The following is an 8886-amino-acid chain: Obscurin (8886 aa).

Ig-like domains are found at residues 9–99, 109–201, 234–320, and 329–415; these read PRFL…LRVD, PHFL…LVVD, PPSP…QTYS, and PTVP…AELS. A disulfide bridge links Cys-30 with Cys-81. A disordered region spans residues 135 to 165; it reads SPQPAVSWSKDGRRLGPPDAPHVRVEEHGES. Positions 144–164 are enriched in basic and acidic residues; it reads KDGRRLGPPDAPHVRVEEHGE. 2 cysteine pairs are disulfide-bonded: Cys-257–Cys-309 and Cys-352–Cys-402. Phosphoserine is present on Ser-393. One can recognise a Fibronectin type-III 1 domain in the interval 513–610; sequence PPADPVVKAK…FPGTMHLVPM (98 aa). Ig-like domains are found at residues 702 to 793, 859 to 951, 951 to 1043, 1043 to 1135, 1135 to 1227, 1227 to 1319, 1319 to 1407, 1411 to 1503, 1503 to 1595, 1595 to 1687, 1687 to 1779, 1779 to 1871, 1871 to 1963, 1963 to 2051, 2055 to 2147, 2152 to 2241, 2242 to 2325, 2329 to 2415, 2420 to 2504, 2598 to 2681, 2721 to 2812, 2900 to 2984, 3078 to 3162, 3258 to 3342, 3348 to 3431, 3527 to 3610, 3616 to 3700, 3785 to 3876, 3881 to 3964, 4042 to 4125, 4130 to 4213, 4219 to 4301, 4307 to 4389, 4395 to 4477, 4483 to 4565, 4571 to 4653, 4659 to 4741, 4746 to 4829, 4833 to 4916, 4923 to 5007, 5013 to 5105, 5378 to 5464, and 5557 to 5659; these read PSSK…QDIT, PKLV…VAEP, PKMV…VTEP, PKLV…VTEP, PKLV…FRLD, PKLA…VAEP, PKLM…VAEP, TRLM…VAEA, PERP…EEVA, AKFS…ARLT, PRVV…AALR, PVLF…AKLN, PVSF…ASLR, PVTL…QSIT, PVVL…AEVT, PVVF…SKVS, PVDI…AKLC, NRFT…ARLL, PSIF…SSIV, PVRF…ATLT, ATLT…ATLT, PAKF…ATLT, PTKF…ATLS, PSRF…ATLS, PRFI…ATLN, PRFI…AVLT, PKFT…ATLS, PRFI…ATLS, PAKF…ATLS, PQVV…TSAT, PVRF…ARLS, PKFK…PEVT, LEVL…ARLS, and PQMV…TFNV. 14 disulfides stabilise this stretch: Cys-885/Cys-935, Cys-977/Cys-1027, Cys-1069/Cys-1119, Cys-1161/Cys-1211, Cys-1253/Cys-1303, Cys-1345/Cys-1395, Cys-1437/Cys-1487, Cys-1529/Cys-1579, Cys-1621/Cys-1671, Cys-1713/Cys-1763, Cys-1805/Cys-1855, Cys-1897/Cys-1947, Cys-1989/Cys-2039, and Cys-2081/Cys-2131. Cys-2263 and Cys-2313 are joined by a disulfide. Intrachain disulfides connect Cys-2620–Cys-2669, Cys-2743–Cys-2793, Cys-2922–Cys-2972, Cys-3100–Cys-3150, Cys-3280–Cys-3330, Cys-3369–Cys-3419, Cys-3549–Cys-3599, and Cys-3638–Cys-3688. Ser-3321 carries the post-translational modification Phosphoserine. The residue at position 3802 (Ser-3802) is a Phosphoserine. Cystine bridges form between Cys-3815–Cys-3864, Cys-3903–Cys-3952, Cys-4064–Cys-4113, Cys-4152–Cys-4201, Cys-4240–Cys-4289, Cys-4328–Cys-4377, Cys-4416–Cys-4465, Cys-4504–Cys-4553, Cys-4592–Cys-4641, Cys-4680–Cys-4729, Cys-4768–Cys-4817, Cys-4856–Cys-4906, Cys-4945–Cys-4995, and Cys-5034–Cys-5086. Phosphoserine is present on Ser-4960. A Fibronectin type-III 2 domain is found at 5471-5569; that stretch reads PPEDAEVVGR…VKIAPAPAPA (99 aa). Cys-5590 and Cys-5643 are joined by a disulfide. A Phosphoserine modification is found at Ser-5699. Residues 5700-5736 are disordered; the sequence is REPTLDSISELPEEDSRVQHLRQEAEETAPDLSEGYS. A Phosphothreonine modification is found at Thr-5703. Position 5706 is a phosphoserine (Ser-5706). A compositionally biased stretch (basic and acidic residues) spans 5713 to 5724; sequence EDSRVQHLRQEA. Residue Thr-5737 is modified to Phosphothreonine. Ser-5754 is subject to Phosphoserine. The region spanning 5821-5850 is the IQ domain; that stretch reads LDKAAVKIQAAFKGYKVRKEMKQQEGPVFS. Residues 5847–5930 enclose the Ig-like 48 domain; the sequence is PVFSRTFGDT…QVSTKSGRVS (84 aa). An intrachain disulfide couples Cys-5868 to Cys-5920. Positions 5977–5996 are disordered; the sequence is EEELFLSADEGPGEPEEPAD. 3 consecutive Ig-like domains span residues 6077–6166, 6209–6298, and 6320–6416; these read PVFL…AELR, PQVL…ARLL, and PRIL…LHIS. Cys-6098 and Cys-6150 are joined by a disulfide. The tract at residues 6504–6546 is disordered; it reads KLQVPGGDSDEETKTPSASPRHGRSRPSSSVQESSSESEDGDS. A Phosphoserine modification is found at Ser-6512. Thr-6518 carries the phosphothreonine modification. Positions 6519 to 6538 are enriched in low complexity; that stretch reads PSASPRHGRSRPSSSVQESS. Phosphoserine occurs at positions 6520 and 6522. Residues 6549–6616 enclose the SH3 domain; that stretch reads EIFDIYVVTA…SPAYLDKRLK (68 aa). Positions 6642 to 6826 constitute a DH domain; that stretch reads RLSSVIQELL…SALPQRAENK (185 aa). The PH domain maps to 6844–6953; that stretch reads EPIRQGHFIV…WVKEICGIQQ (110 aa). Arg-6924 is a binding site for a 1,2-diacyl-sn-glycero-3-phospho-(1D-myo-inositol-4,5-bisphosphate). Arg-6929 serves as a coordination point for a 1,2-diacyl-sn-glycero-3-phospho-(1D-myo-inositol-3,4-bisphosphate). 2 consecutive Ig-like domains span residues 6963–7046 and 7057–7147; these read PEFE…GNAS and PRFV…GELY. 2 disulfides stabilise this stretch: Cys-6984–Cys-7036 and Cys-7078–Cys-7131. The segment at 7200–7257 is disordered; it reads ALGPSPGDLPNTRQSEPPAFEEAASQIPGAASGTPEVSQPGTHKGLEQETTSSGSQGW. Over residues 7247–7257 the composition is skewed to polar residues; it reads QETTSSGSQGW. Residues 7306 to 7394 enclose the Ig-like 54 domain; that stretch reads PSMQVTIEDV…GQVLCKAELL (89 aa). In terms of domain architecture, Protein kinase 1 spans 7416–7669; that stretch reads YDVQEEIGRG…TSQCLAHPWF (254 aa). ATP-binding positions include 7422 to 7430 and Lys-7445; that span reads IGRGVFGFV. Asp-7535 functions as the Proton acceptor in the catalytic mechanism. Disordered regions lie at residues 7717–7810, 7879–8106, and 8150–8180; these read GPPD…SPGC, EQAS…TTRK, and SSEE…VPLR. The residue at position 7779 (Ser-7779) is a Phosphoserine. Residues 7793–7804 are compositionally biased toward low complexity; the sequence is AAVPASPQSAGP. Residues 7941–7952 show a composition bias toward basic and acidic residues; it reads TTAKDRGHKEGF. Over residues 7986-7996 the composition is skewed to polar residues; the sequence is SCHSELGSGSQ. Composition is skewed to low complexity over residues 8000–8014 and 8053–8073; these read GPPS…PPQS and GSLS…ASQV. The residue at position 8161 (Ser-8161) is a Phosphoserine. Residues 8380–8464 enclose the Ig-like 55 domain; it reads KGRDQELSDE…VSNPLGTAVT (85 aa). A disulfide bridge connects residues Cys-8401 and Cys-8453. Residues 8474–8566 enclose the Fibronectin type-III 3 domain; sequence PSSSPRPEVG…PSEQVLLGGP (93 aa). A Protein kinase 2 domain is found at 8590–8842; it reads FAFQMQIRRG…ASTCLQCGWL (253 aa). ATP is bound by residues 8596–8604 and Lys-8619; that span reads IRRGRFSVV. Asp-8709 functions as the Proton acceptor in the catalytic mechanism.

It belongs to the protein kinase superfamily. CAMK Ser/Thr protein kinase family. In terms of assembly, interacts (via protein kinase domain 1) with CDH2 and (via protein kinase domain 1) with ATP1B1. Isoform 2 is found in a complex with DSG2, DESM, GJA1, CDH2 and VCL. Isoform 3 is found in a complex with DSG2, DESM, GJA1, CDH2, ANK3 and VCL. It depends on Mg(2+) as a cofactor. Autophosphorylated by protein kinase domain 1 and 2. Post-translationally, two small isoforms, one probably containing protein kinase domain 2 and a partial protein kinase domain 1 and one containing only protein kinase domain 2, are glycosylated. As to expression, expressed in skeletal muscles including flexor digitorum brevis (FDB), soleus and tibialis anterior muscles, and to a lesser extent in heart muscles (at protein level). Isoform 2 and isoform 3 are expressed in the myocardium (at protein level).

The protein localises to the cytoplasm. It is found in the myofibril. Its subcellular location is the sarcomere. It localises to the m line. The protein resides in the z line. The protein localises to the cell membrane. It is found in the sarcolemma. Its subcellular location is the nucleus. It localises to the secreted. It catalyses the reaction L-seryl-[protein] + ATP = O-phospho-L-seryl-[protein] + ADP + H(+). It carries out the reaction L-threonyl-[protein] + ATP = O-phospho-L-threonyl-[protein] + ADP + H(+). Structural component of striated muscles which plays a role in myofibrillogenesis. Probably involved in the assembly of myosin into sarcomeric A bands in striated muscle. Has serine/threonine protein kinase activity and phosphorylates N-cadherin CDH2 and sodium/potassium-transporting ATPase subunit ATP1B1. Binds (via the PH domain) strongly to phosphatidylinositol 3,4-bisphosphate (PtdIns(3,4)P2) and phosphatidylinositol 4,5-bisphosphate (PtdIns(4,5)P2), and to a lesser extent to phosphatidylinositol 3-phosphate (PtdIns(3)P), phosphatidylinositol 4-phosphate (PtdIns(4)P), phosphatidylinositol 5-phosphate (PtdIns(5)P) and phosphatidylinositol 3,4,5-trisphosphate (PtdIns(3,4,5)P3). Its function is as follows. Isoform 2 and isoform 3: bind phosphatidylinositol bisphosphates (PIP2s) via their PH domains and negatively regulate the PI3K/AKT/mTOR signaling pathway, thus contributing to the regulation of cardiomyocyte size and adhesion. In Mus musculus (Mouse), this protein is Obscurin.